Here is a 390-residue protein sequence, read N- to C-terminus: GDSL esterase/lipase At1g28640 (390 aa).

A signal peptide spans 1–26; it reads MASSLEKLISSFLLVLYSTTIIVASS. Serine 42 (nucleophile) is an active-site residue. Residues asparagine 105, asparagine 138, and asparagine 321 are each glycosylated (N-linked (GlcNAc...) asparagine). Active-site residues include aspartate 346 and histidine 349. A glycan (N-linked (GlcNAc...) asparagine) is linked at asparagine 364.

This sequence belongs to the 'GDSL' lipolytic enzyme family.

It is found in the secreted. This is GDSL esterase/lipase At1g28640 from Arabidopsis thaliana (Mouse-ear cress).